The sequence spans 376 residues: Cyclin-dependent kinase 9-B (376 aa).

A Protein kinase domain is found at Tyr-19–Phe-319. ATP is bound by residues Ile-25–Val-33 and Lys-48. The Proton acceptor role is filled by Asp-153. The interval Pro-345–Phe-376 is disordered. The segment covering Pro-354–Gln-369 has biased composition (low complexity).

It belongs to the protein kinase superfamily. CMGC Ser/Thr protein kinase family. CDC2/CDKX subfamily. As to quaternary structure, associates with cyclin-T to form P-TEFb.

It localises to the nucleus. It catalyses the reaction L-seryl-[protein] + ATP = O-phospho-L-seryl-[protein] + ADP + H(+). The enzyme catalyses L-threonyl-[protein] + ATP = O-phospho-L-threonyl-[protein] + ADP + H(+). It carries out the reaction [DNA-directed RNA polymerase] + ATP = phospho-[DNA-directed RNA polymerase] + ADP + H(+). Its function is as follows. Member of the cyclin-dependent kinase pair (CDK9/cyclin-T) complex, also called positive transcription elongation factor B (P-TEFb), which is proposed to facilitate the transition from abortive to production elongation by phosphorylating the CTD (C-terminal domain) of the large subunit of RNA polymerase II (RNAP II) and SUPT5H. The sequence is that of Cyclin-dependent kinase 9-B (cdk9-b) from Xenopus laevis (African clawed frog).